A 93-amino-acid chain; its full sequence is uncharacterized protein (93 aa).

A TRAM domain is found at 24-85 (QLQVGDTLKL…IQTQVGRLFF (62 aa)).

The protein belongs to the ycf81 family.

This is an uncharacterized protein from Thermus thermophilus.